The sequence spans 342 residues: 4-hydroxy-2-oxovalerate aldolase (342 aa).

Residues 7–259 form the Pyruvate carboxyltransferase domain; the sequence is ILVHDMSLRD…CTGVDLGRIQ (253 aa). 15-16 serves as a coordination point for substrate; that stretch reads RD. Asp-16 serves as a coordination point for Mn(2+). The Proton acceptor role is filled by His-19. Ser-169 and His-198 together coordinate substrate. Mn(2+) is bound by residues His-198 and His-200. Tyr-289 serves as a coordination point for substrate.

It belongs to the 4-hydroxy-2-oxovalerate aldolase family.

The enzyme catalyses (S)-4-hydroxy-2-oxopentanoate = acetaldehyde + pyruvate. The polypeptide is 4-hydroxy-2-oxovalerate aldolase (Alkalilimnicola ehrlichii (strain ATCC BAA-1101 / DSM 17681 / MLHE-1)).